The chain runs to 623 residues: Translation initiation factor IF-2 (623 aa).

Positions 1-18 (MTLNKKTNNENSSKTTPK) are enriched in low complexity. 2 disordered regions span residues 1-21 (MTLNKKTNNENSSKTTPKLSK) and 92-115 (PQKEQTPPQLQPQKPPLTKSKLQA). One can recognise a tr-type G domain in the interval 125-293 (KTPPIVTIMG…ILLFSEIQNL (169 aa)). Positions 134-141 (GHVDHGKT) are G1. Residue 134–141 (GHVDHGKT) participates in GTP binding. The G2 stretch occupies residues 159 to 163 (GITQH). The G3 stretch occupies residues 180–183 (DTPG). Residues 180–184 (DTPGH) and 234–237 (NKVD) each bind GTP. The interval 234-237 (NKVD) is G4. The segment at 270-272 (SAL) is G5.

The protein belongs to the TRAFAC class translation factor GTPase superfamily. Classic translation factor GTPase family. IF-2 subfamily.

It localises to the cytoplasm. One of the essential components for the initiation of protein synthesis. Protects formylmethionyl-tRNA from spontaneous hydrolysis and promotes its binding to the 30S ribosomal subunits. Also involved in the hydrolysis of GTP during the formation of the 70S ribosomal complex. The polypeptide is Translation initiation factor IF-2 (Aster yellows witches'-broom phytoplasma (strain AYWB)).